Consider the following 419-residue polypeptide: Methylthioribose kinase (419 aa).

ATP is bound by residues asparagine 49 and lysine 64. Aspartate 239 contacts substrate. An ATP-binding site is contributed by 256 to 258 (DPE). Arginine 365 is a substrate binding site.

This sequence belongs to the methylthioribose kinase family. As to quaternary structure, homodimer.

The enzyme catalyses 5-(methylsulfanyl)-D-ribose + ATP = 5-(methylsulfanyl)-alpha-D-ribose 1-phosphate + ADP + H(+). The catalysed reaction is 5-deoxy-D-ribose + ATP = 5-deoxy-alpha-D-ribose 1-phosphate + ADP + H(+). The protein operates within amino-acid biosynthesis; L-methionine biosynthesis via salvage pathway; S-methyl-5-thio-alpha-D-ribose 1-phosphate from S-methyl-5'-thioadenosine (hydrolase route): step 2/2. Functionally, catalyzes the phosphorylation of methylthioribose into methylthioribose-1-phosphate. Also catalyzes the phosphorylation of 5-deoxyribose to 5-deoxyribose-1-phosphate. Part of a bifunctional DHAP-shunt salvage pathway for SAM by-products. The protein is Methylthioribose kinase of Escherichia coli O45:K1 (strain S88 / ExPEC).